The chain runs to 29 residues: Myosin heavy chain, muscle (29 aa).

The segment covering 1–16 (SKYESEGVARSEELQE) has biased composition (basic and acidic residues). The disordered stretch occupies residues 1–29 (SKYESEGVARSEELQEVHQAFADAGRKPI).

In terms of assembly, muscle myosin is a hexameric protein that consists of 2 heavy chain subunits (MHC), 2 alkali light chain subunits (MLC) and 2 regulatory light chain subunits (MLC-2).

The protein localises to the cytoplasm. Its subcellular location is the myofibril. In terms of biological role, muscle contraction. The protein is Myosin heavy chain, muscle of Bombyx mori (Silk moth).